The sequence spans 381 residues: Alcohol dehydrogenase class-3 (381 aa).

Position 49 (Cys-49) interacts with Zn(2+). His-50 provides a ligand contact to NAD(+). Residues Thr-51 and His-71 each coordinate an alcohol. Zn(2+)-binding residues include His-71, Glu-72, Cys-101, Cys-104, Cys-107, Cys-115, and Cys-179. NAD(+)-binding positions include 204 to 209 (GLGTVG), Asp-228, Lys-233, Ile-274, 297 to 299 (VGV), 322 to 324 (TAF), and Arg-374.

It belongs to the zinc-containing alcohol dehydrogenase family. Class-III subfamily. In terms of assembly, homodimer. Requires Zn(2+) as cofactor. Expressed at low levels in the leaves.

The protein localises to the cytoplasm. It catalyses the reaction a primary alcohol + NAD(+) = an aldehyde + NADH + H(+). The catalysed reaction is a secondary alcohol + NAD(+) = a ketone + NADH + H(+). It carries out the reaction S-(hydroxymethyl)glutathione + NADP(+) = S-formylglutathione + NADPH + H(+). The enzyme catalyses S-(hydroxymethyl)glutathione + NAD(+) = S-formylglutathione + NADH + H(+). The sequence is that of Alcohol dehydrogenase class-3 (FDH) from Zea mays (Maize).